The chain runs to 517 residues: Maturase K (517 aa).

This sequence belongs to the intron maturase 2 family. MatK subfamily.

The protein localises to the plastid. Its subcellular location is the chloroplast. Usually encoded in the trnK tRNA gene intron. Probably assists in splicing its own and other chloroplast group II introns. The protein is Maturase K of Acer pseudoplatanus (Sycamore maple).